The following is a 248-amino-acid chain: MADS-box transcription factor 8 (248 aa).

The MADS-box domain occupies 1 to 61 (MGRGRVELKR…GKLYEFCSGQ (61 aa)). The K-box domain occupies 90-180 (VQSSRNEYLK…RRKLEESNQL (91 aa)).

May interact with the K-box of MADS6 and MADS16. May interact with MADS13 and MADS18. Binds to FCA. In terms of tissue distribution, expressed in lodicules, stamens and carpels.

Its subcellular location is the nucleus. Functionally, probable transcription factor. May be involved in the control of flowering time. The chain is MADS-box transcription factor 8 (MADS8) from Oryza sativa subsp. japonica (Rice).